The sequence spans 418 residues: MEINNGAQPENAAVSIPSRSPSGKSEKRKSPSIVSGCRTVMNERSFTNYWSVERFTVQLELHNPAEFMLAPKFGDGDYEFVMKLFPNGKDEETAGYLSLFLLINKCPNPRLRFRVSFTVETADGPRSCHLNKNLVTINRSGIVTASKFFSLDILRSAMNVYIPNDILTIGCELTIFGECTTQISSLFKPYQRTHSASSTSRSLSSPNTKCLKIDESSAHDAFTEFLSTGEFSDFIIVASCGREFPTHMCILAARSEYFKVLLRNHSTKEFMSKRLQFDDISARTLDVLLRHMYASAAGRVVKLEEDQLTEDLISAMDRLMINSLRDEVARLIGSKVTVDNVLTRISMAAELRLDDTYDVLLDFFSNHKHECMKLTAWDELESAKPPLAIKILRDAFSNTDSPSTTSMDSRIIDRITLT.

Residues 1–33 (MEINNGAQPENAAVSIPSRSPSGKSEKRKSPSI) form a disordered region. The region spanning 45-173 (SFTNYWSVER…NDILTIGCEL (129 aa)) is the MATH domain. Positions 232-293 (SDFIIVASCG…TLDVLLRHMY (62 aa)) constitute a BTB domain.

Interacts with cul-3.

Its pathway is protein modification; protein ubiquitination. In terms of biological role, probable substrate-specific adapter of an E3 ubiquitin-protein ligase complex which mediates the ubiquitination and subsequent proteasomal degradation of target proteins. In Caenorhabditis elegans, this protein is BTB and MATH domain-containing protein 41 (bath-41).